The following is a 74-amino-acid chain: U3-agatoxin-Ao1f (74 aa).

Residues 1–20 form the signal peptide; the sequence is MRAIISLLLISTMVFGVIEA. A propeptide spanning residues 21 to 34 is cleaved from the precursor; the sequence is VSLEEGLKIFEGER. 4 cysteine pairs are disulfide-bonded: cysteine 37/cysteine 53, cysteine 44/cysteine 58, cysteine 52/cysteine 68, and cysteine 60/cysteine 66. Asparagine 72 bears the Asparagine amide mark.

It belongs to the neurotoxin 07 (Beta/delta-agtx) family. 03 (aga-4) subfamily. Aga sub-subfamily. Expressed by the venom gland.

It localises to the secreted. Functionally, insecticidal neurotoxin that modulates the insect Nav channel (DmNaV1/tipE (para/tipE)) in a unique manner, with both the activation and inactivation processes being affected. The voltage dependence of activation is shifted toward more hyperpolarized potentials (analogous to site 4 toxins) and a non-inactivating persistent sodium current is induced (site 3-like action). Interestingly, both effects take place in a voltage-dependent manner, producing a bell-shaped curve between -80 and 0 mV. In vivo, induces an irreversible spastic paralysis when injected into insects. This chain is U3-agatoxin-Ao1f, found in Agelena orientalis (Funnel-web spider).